The chain runs to 288 residues: 33 kDa chaperonin (288 aa).

Cystine bridges form between C237–C239 and C270–C273.

This sequence belongs to the HSP33 family. Under oxidizing conditions two disulfide bonds are formed involving the reactive cysteines. Under reducing conditions zinc is bound to the reactive cysteines and the protein is inactive.

It is found in the cytoplasm. Redox regulated molecular chaperone. Protects both thermally unfolding and oxidatively damaged proteins from irreversible aggregation. Plays an important role in the bacterial defense system toward oxidative stress. This Agathobacter rectalis (strain ATCC 33656 / DSM 3377 / JCM 17463 / KCTC 5835 / VPI 0990) (Eubacterium rectale) protein is 33 kDa chaperonin.